Reading from the N-terminus, the 295-residue chain is GTPase Era (295 aa).

The Era-type G domain maps to 4–171 (KSGFVTIIGR…IKQIVSFLPE (168 aa)). The segment at 12–19 (GRPNVGKS) is G1. A GTP-binding site is contributed by 12–19 (GRPNVGKS). A G2 region spans residues 38-42 (QTTRN). Residues 59–62 (DTPG) are G3. Residues 59–63 (DTPGI) and 121–124 (NKID) contribute to the GTP site. The tract at residues 121 to 124 (NKID) is G4. Residues 150–152 (ISA) form a G5 region. A KH type-2 domain is found at 202 to 280 (LDQEIPHGIA…FLELWVKVNE (79 aa)).

This sequence belongs to the TRAFAC class TrmE-Era-EngA-EngB-Septin-like GTPase superfamily. Era GTPase family. As to quaternary structure, monomer.

Its subcellular location is the cytoplasm. The protein resides in the cell membrane. Functionally, an essential GTPase that binds both GDP and GTP, with rapid nucleotide exchange. Plays a role in 16S rRNA processing and 30S ribosomal subunit biogenesis and possibly also in cell cycle regulation and energy metabolism. The protein is GTPase Era of Alkaliphilus metalliredigens (strain QYMF).